The chain runs to 362 residues: MEELSQALAGSFSVSQDLNSTAAPHPRLSQYKSKYSSLEQSERRRQLLELQKLKRLDYVNHARRLAEDDWTGMESEEEEEKKDDEEMDVDTGKELPKRYANQLMLSEWLIDVPSDLGQEWIVVVCPVGKRSLIVASQGLTSAYTKSGYCVNTFPSLLPGGNRRNSTTEKDYTILDCIYSEVNQTYYVLDVMCWRGHPFYDCQTDFRFYWLHSKLPEEEGLGEKTKRNPFKFVGLKNFPCTPESLCKVLSMDFPFEVDGLLFYHKQTHYSPGSTPLVGWLRPYMVSDVLGVAVPACPLTTKPEYAGYQLQQIIEHKKSKKEGIMGKLTPRASENGHYELEHLSTPKLKSPPQRPNHPESLMEN.

M1 is modified (N-acetylmethionine). Disordered regions lie at residues 1–40 (MEEL…SLEQ) and 69–90 (DWTG…MDVD). Positions 1–65 (MEELSQALAG…LDYVNHARRL (65 aa)) are necessary for interaction with KPNB1 and m3G-cap U1 and U5 snRNP import receptor activity. Residues 1 to 160 (MEELSQALAG…NTFPSLLPGG (160 aa)) form a necessary for interaction with XPO1 region. The 63-residue stretch at 11–73 (SFSVSQDLNS…RLAEDDWTGM (63 aa)) folds into the IBB domain. Polar residues predominate over residues 12 to 22 (FSVSQDLNSTA). Over residues 69-89 (DWTGMESEEEEEKKDDEEMDV) the composition is skewed to acidic residues. S75 carries the post-translational modification Phosphoserine. Residues 128 to 130 (GKR) form an interaction with m3G-cap structure region. A necessary for binding to the m3G-cap structure region spans residues 210-330 (LHSKLPEEEG…GIMGKLTPRA (121 aa)). The segment at 319 to 362 (KEGIMGKLTPRASENGHYELEHLSTPKLKSPPQRPNHPESLMEN) is disordered. A compositionally biased stretch (basic and acidic residues) spans 332-342 (ENGHYELEHLS).

It belongs to the snurportin family. As to quaternary structure, component of an import snRNP complex composed of KPNB1, SNUPN, SMN1 and ZNF259. Component of a nuclear export receptor complex composed of KPNB1, Ran, SNUPN and XPO1. Found in a trimeric export complex with SNUPN, Ran and XPO1. Interacts (via IBB domain) with KPNB1; the interaction is direct. Interacts with DDX20, IPO7, SMN1, SNRPB and XPO1. Interacts directly with XPO1. Its interaction with XPO1 and binding to m3G-cap U snRNPs appears to be mutually exclusive. Can form homomers.

It is found in the nucleus. Its subcellular location is the cytoplasm. Its function is as follows. Functions as an U snRNP-specific nuclear import adapter. Involved in the trimethylguanosine (m3G)-cap-dependent nuclear import of U snRNPs. Binds specifically to the terminal m3G-cap U snRNAs. The polypeptide is Snurportin-1 (SNUPN) (Bos taurus (Bovine)).